We begin with the raw amino-acid sequence, 201 residues long: Large ribosomal subunit protein uL4 (201 aa).

The tract at residues Arg-44–Ala-68 is disordered.

It belongs to the universal ribosomal protein uL4 family. In terms of assembly, part of the 50S ribosomal subunit.

Functionally, one of the primary rRNA binding proteins, this protein initially binds near the 5'-end of the 23S rRNA. It is important during the early stages of 50S assembly. It makes multiple contacts with different domains of the 23S rRNA in the assembled 50S subunit and ribosome. In terms of biological role, forms part of the polypeptide exit tunnel. In Buchnera aphidicola subsp. Acyrthosiphon pisum (strain 5A), this protein is Large ribosomal subunit protein uL4.